The sequence spans 344 residues: N-lysine methyltransferase KMT5A-A (344 aa).

Positions 143–176 (TSSKHRKPARRKVKRSTKRAAESKSPANRKVTDY) are disordered. A compositionally biased stretch (basic residues) spans 145-160 (SKHRKPARRKVKRSTK). The region spanning 208-329 (DGMMVRFIEG…EGEELLYDYG (122 aa)) is the SET domain. Residues 218-220 (KGR), Y263, and 290-291 (NH) each bind S-adenosyl-L-methionine.

Belongs to the class V-like SAM-binding methyltransferase superfamily. Histone-lysine methyltransferase family. PR/SET subfamily.

Its subcellular location is the nucleus. The protein resides in the chromosome. The catalysed reaction is L-lysyl(20)-[histone H4] + S-adenosyl-L-methionine = N(6)-methyl-L-lysyl(20)-[histone H4] + S-adenosyl-L-homocysteine + H(+). It catalyses the reaction L-lysyl-[protein] + S-adenosyl-L-methionine = N(6)-methyl-L-lysyl-[protein] + S-adenosyl-L-homocysteine + H(+). Its function is as follows. Protein-lysine N-methyltransferase that monomethylates both histones and non-histone proteins. Specifically monomethylates 'Lys-20' of histone H4 (H4K20me1). H4K20me1 is enriched during mitosis and represents a specific tag for epigenetic transcriptional repression. Mainly functions in euchromatin regions, thereby playing a central role in the silencing of euchromatic genes. Required for cell proliferation, probably by contributing to the maintenance of proper higher-order structure of DNA during mitosis. Involved in chromosome condensation and proper cytokinesis. The chain is N-lysine methyltransferase KMT5A-A from Danio rerio (Zebrafish).